Reading from the N-terminus, the 212-residue chain is ATP-dependent dethiobiotin synthetase BioD (212 aa).

13 to 18 lines the ATP pocket; it reads GIGKTV. Residue Thr17 coordinates Mg(2+). Lys33 is an active-site residue. Ser37 provides a ligand contact to substrate. A Mg(2+)-binding site is contributed by Glu100. ATP is bound by residues 100 to 103 and 184 to 186; these read EGAG and PLL.

It belongs to the dethiobiotin synthetase family. In terms of assembly, homodimer. Requires Mg(2+) as cofactor.

The protein localises to the cytoplasm. It carries out the reaction (7R,8S)-7,8-diammoniononanoate + CO2 + ATP = (4R,5S)-dethiobiotin + ADP + phosphate + 3 H(+). It functions in the pathway cofactor biosynthesis; biotin biosynthesis; biotin from 7,8-diaminononanoate: step 1/2. In terms of biological role, catalyzes a mechanistically unusual reaction, the ATP-dependent insertion of CO2 between the N7 and N8 nitrogen atoms of 7,8-diaminopelargonic acid (DAPA, also called 7,8-diammoniononanoate) to form a ureido ring. The protein is ATP-dependent dethiobiotin synthetase BioD of Brucella canis (strain ATCC 23365 / NCTC 10854 / RM-666).